A 468-amino-acid polypeptide reads, in one-letter code: PTS system mannitol-specific EIICB component (468 aa).

The Cytoplasmic portion of the chain corresponds to 1 to 25 (MNNQPSFRARVQKFGSFLSGMIMPN). A PTS EIIC type-2 domain is found at 14-344 (FGSFLSGMIM…ILKTSKATAE (331 aa)). Residues 26 to 47 (IGAFIAWGLITALFIPTGWWPN) traverse the membrane as a helical segment. Topologically, residues 48–51 (EQLA) are extracellular. The chain crosses the membrane as a helical span at residues 52–72 (ELVGPMITYLLPLLIGYTGGK). Over 73–135 (MIYDVRGGVV…SGFEMLVNNF (63 aa)) the chain is Cytoplasmic. A helical membrane pass occupies residues 136-157 (SAGILAAILAIVAFLGIGPVVV). Topologically, residues 158 to 166 (SFSNVLASG) are extracellular. The helical transmembrane segment at 167-187 (VEVIIGAGLLPLASIFIEPAK) threads the bilayer. Residues 188-274 (VLFLNNAINH…ILMKPTLILA (87 aa)) lie on the Cytoplasmic side of the membrane. Residues 275–294 (VIAGGMSGVFTFVLFNAGLV) form a helical membrane-spanning segment. At 295–314 (AVPSPGSIFALLAMTPRGEY) the chain is on the extracellular side. Residues 315–336 (AGVLAGVIIATVVSFVIASIIL) form a helical membrane-spanning segment. The Cytoplasmic portion of the chain corresponds to 337–468 (KTSKATAEDL…YDELVNRLKS (132 aa)). Positions 380–468 (NKIIFACDAG…YDELVNRLKS (89 aa)) constitute a PTS EIIB type-2 domain. Cysteine 386 (phosphocysteine intermediate; for EIIB activity) is an active-site residue. The residue at position 386 (cysteine 386) is a Phosphocysteine; by EIIA.

As to quaternary structure, homodimer.

It is found in the cell membrane. The enzyme catalyses D-mannitol(out) + N(pros)-phospho-L-histidyl-[protein] = D-mannitol 1-phosphate(in) + L-histidyl-[protein]. The phosphoenolpyruvate-dependent sugar phosphotransferase system (sugar PTS), a major carbohydrate active transport system, catalyzes the phosphorylation of incoming sugar substrates concomitantly with their translocation across the cell membrane. The enzyme II CmtAB PTS system is involved in D-mannitol transport. The polypeptide is PTS system mannitol-specific EIICB component (mtlA) (Halalkalibacterium halodurans (strain ATCC BAA-125 / DSM 18197 / FERM 7344 / JCM 9153 / C-125) (Bacillus halodurans)).